The sequence spans 298 residues: GTP cyclohydrolase FolE2 (298 aa).

This sequence belongs to the GTP cyclohydrolase IV family.

It carries out the reaction GTP + H2O = 7,8-dihydroneopterin 3'-triphosphate + formate + H(+). It participates in cofactor biosynthesis; 7,8-dihydroneopterin triphosphate biosynthesis; 7,8-dihydroneopterin triphosphate from GTP: step 1/1. Functionally, converts GTP to 7,8-dihydroneopterin triphosphate. The chain is GTP cyclohydrolase FolE2 from Pseudomonas fluorescens (strain Pf0-1).